We begin with the raw amino-acid sequence, 109 residues long: UPF0060 membrane protein PA3275 (109 aa).

Helical transmembrane passes span 5-25, 27-47, 59-79, and 84-104; these read FWFV…YLWL, LGKS…FALL, AYAA…AFVE, and LWSD…VLFG.

It belongs to the UPF0060 family.

The protein resides in the cell inner membrane. This Pseudomonas aeruginosa (strain ATCC 15692 / DSM 22644 / CIP 104116 / JCM 14847 / LMG 12228 / 1C / PRS 101 / PAO1) protein is UPF0060 membrane protein PA3275.